The sequence spans 180 residues: ATP-dependent protease subunit HslV (180 aa).

The active site involves Thr7. 3 residues coordinate Na(+): Ala165, Cys168, and Thr171.

It belongs to the peptidase T1B family. HslV subfamily. A double ring-shaped homohexamer of HslV is capped on each side by a ring-shaped HslU homohexamer. The assembly of the HslU/HslV complex is dependent on binding of ATP.

The protein localises to the cytoplasm. It catalyses the reaction ATP-dependent cleavage of peptide bonds with broad specificity.. With respect to regulation, allosterically activated by HslU binding. Functionally, protease subunit of a proteasome-like degradation complex believed to be a general protein degrading machinery. This chain is ATP-dependent protease subunit HslV, found in Geobacillus sp. (strain WCH70).